The chain runs to 331 residues: UPF0324 membrane protein SAR0338 (331 aa).

The next 11 helical transmembrane spans lie at 9-26 (FMIGLSLTFIVALFSFLA), 31-48 (ILDKVGALTIAILIAILY), 69-88 (LLRFAIILYGLKLNIFDIIG), 93-115 (LLAIDVGVVIFSIVMMLFVNKLL), 122-144 (ALLLGVGTGVCGAAAIAAVAPIF), 154-176 (SIGIIALIGTIFSLIYTAIYAIF), 183-202 (YGAWSGVSLHEIAHVVLAGG), 217-234 (LGRVFLLIPLTIVLILIM), 247-269 (ISIPYFLIGFVIMALVNTYVTIP), 273-295 (LNILNTVSTICLLMAMVALGLNV), and 308-330 (LMTIIITSICLSSLAFIVVHWLY).

This sequence belongs to the UPF0324 family.

The protein resides in the cell membrane. The polypeptide is UPF0324 membrane protein SAR0338 (Staphylococcus aureus (strain MRSA252)).